We begin with the raw amino-acid sequence, 260 residues long: Small ribosomal subunit protein uS2 (260 aa).

The protein belongs to the universal ribosomal protein uS2 family.

The protein is Small ribosomal subunit protein uS2 of Streptococcus gordonii (strain Challis / ATCC 35105 / BCRC 15272 / CH1 / DL1 / V288).